The following is a 414-amino-acid chain: Cytochrome b (414 aa).

2 helical membrane passes run 40 to 60 and 84 to 104; these read FFGS…VWLA and GWLI…VIYL. Heme b is bound by residues His-91 and His-105. The next 8 membrane-spanning stretches (helical) occupy residues 121-141, 154-174, 188-208, 252-272, 294-314, 317-337, 351-371, and 378-398; these read LLWM…FFGY, QVIV…SVWV, FFAF…LHIV, LMGV…NPTM, IAPV…PPMY, QFPG…LPWL, IFKW…WLGI, and YTLL…LMPI. Heme b contacts are provided by His-192 and His-206.

The protein belongs to the cytochrome b family. In terms of assembly, the main subunits of complex b-c1 are: cytochrome b, cytochrome c1 and the Rieske protein. Heme b serves as cofactor.

Its subcellular location is the cell membrane. Its function is as follows. Component of the ubiquinol-cytochrome c reductase complex (complex III or cytochrome b-c1 complex), which is a respiratory chain that generates an electrochemical potential coupled to ATP synthesis. This chain is Cytochrome b (petB), found in Allochromatium vinosum (strain ATCC 17899 / DSM 180 / NBRC 103801 / NCIMB 10441 / D) (Chromatium vinosum).